Consider the following 519-residue polypeptide: Demethylepipodophyllotoxin synthase (519 aa).

Residues 6 to 26 traverse the membrane as a helical segment; the sequence is CLETLLLGFFVLLPCFFYFVW. Residue C458 coordinates heme.

This sequence belongs to the cytochrome P450 family. It depends on heme as a cofactor. In terms of tissue distribution, rhizome-specific expression.

It localises to the membrane. The enzyme catalyses (-)-4'-desmethyl-deoxypodophyllotoxin + reduced [NADPH--hemoprotein reductase] + O2 = 4'-demethylepipodophyllotoxin + oxidized [NADPH--hemoprotein reductase] + H2O + H(+). It functions in the pathway aromatic compound metabolism; phenylpropanoid biosynthesis. In terms of biological role, cytochrome P450 involved in the biosynthesis of etoposide, a chemotherapeutic compound of the topoisomerase inhibitor family. Catalyzes the hydroxylation of deoxypodophyllotoxin to form epipodophyllotoxin. This chain is Demethylepipodophyllotoxin synthase, found in Sinopodophyllum hexandrum (Himalayan may apple).